A 458-amino-acid chain; its full sequence is KAT8 regulatory NSL complex subunit 2 (458 aa).

Lys78 participates in a covalent cross-link: Glycyl lysine isopeptide (Lys-Gly) (interchain with G-Cter in SUMO2). The tract at residues 126–182 (ELGSQTPESSRSEASRILDEDSWSDGDQEPITVDQTWRGDPDSEADSIDSDQEDPLK) is disordered. At Thr131 the chain carries Phosphothreonine. Over residues 135-144 (SRSEASRILD) the composition is skewed to basic and acidic residues. 5 positions are modified to phosphoserine: Ser147, Ser149, Ser168, Ser172, and Ser175. The segment covering 167-178 (DSEADSIDSDQE) has biased composition (acidic residues). The interval 308-364 (DVRCSNQSLPMTRHCLTHICQDTNQVLFKCCQGSEEVPCNKPVPVSLSEDPCCPLHF) is required for interaction with other NSL complex members. Positions 419-458 (QMAGDGCRSQGPRNSEKAPAPLPQSGIATANGKPEPTSVS) are disordered.

In terms of assembly, component of the NSL complex at least composed of KAT8/MOF, KANSL1, KANSL2, KANSL3, MCRS1, PHF20, OGT1/OGT, WDR5 and HCFC1.

The protein resides in the nucleus. Its subcellular location is the mitochondrion. Non-catalytic component of the NSL histone acetyltransferase complex, a multiprotein complex that mediates histone H4 acetylation at 'Lys-5'- and 'Lys-8' (H4K5ac and H4K8ac) at transcription start sites and promotes transcription initiation. Required for NSL complex stability and for transcription of intraciliary transport genes in both ciliated and non-ciliated cells by regulating histone H4 acetylation at 'Lys-5'- and 'Lys-12' (H4K5ac and H4K12ac). This is necessary for cilium assembly in ciliated cells and for organization of the microtubule cytoskeleton in non-ciliated cells. Required within the NSL complex to maintain nuclear architecture stability by promoting KAT8-mediated acetylation of lamin LMNA. In Bos taurus (Bovine), this protein is KAT8 regulatory NSL complex subunit 2 (KANSL2).